We begin with the raw amino-acid sequence, 254 residues long: 3-deoxy-manno-octulosonate cytidylyltransferase (254 aa).

Belongs to the KdsB family.

The protein resides in the cytoplasm. It carries out the reaction 3-deoxy-alpha-D-manno-oct-2-ulosonate + CTP = CMP-3-deoxy-beta-D-manno-octulosonate + diphosphate. It participates in nucleotide-sugar biosynthesis; CMP-3-deoxy-D-manno-octulosonate biosynthesis; CMP-3-deoxy-D-manno-octulosonate from 3-deoxy-D-manno-octulosonate and CTP: step 1/1. The protein operates within bacterial outer membrane biogenesis; lipopolysaccharide biosynthesis. Its function is as follows. Activates KDO (a required 8-carbon sugar) for incorporation into bacterial lipopolysaccharide in Gram-negative bacteria. The protein is 3-deoxy-manno-octulosonate cytidylyltransferase of Pseudomonas syringae pv. syringae (strain B728a).